The following is a 264-amino-acid chain: Glutamate racemase (264 aa).

Substrate-binding positions include 10-11 (DS) and 42-43 (YG). Cys-73 serves as the catalytic Proton donor/acceptor. 74-75 (NT) serves as a coordination point for substrate. The Proton donor/acceptor role is filled by Cys-183. Residue 184 to 185 (TH) coordinates substrate.

Belongs to the aspartate/glutamate racemases family.

The catalysed reaction is L-glutamate = D-glutamate. The protein operates within cell wall biogenesis; peptidoglycan biosynthesis. In terms of biological role, provides the (R)-glutamate required for cell wall biosynthesis. The protein is Glutamate racemase of Streptococcus pyogenes serotype M49 (strain NZ131).